A 77-amino-acid chain; its full sequence is NAD(P)H-quinone oxidoreductase subunit L (77 aa).

2 helical membrane passes run phenylalanine 12–tyrosine 32 and leucine 47–leucine 67.

It belongs to the complex I NdhL subunit family. NDH-1 can be composed of about 15 different subunits; different subcomplexes with different compositions have been identified which probably have different functions.

The protein resides in the cellular thylakoid membrane. It carries out the reaction a plastoquinone + NADH + (n+1) H(+)(in) = a plastoquinol + NAD(+) + n H(+)(out). The catalysed reaction is a plastoquinone + NADPH + (n+1) H(+)(in) = a plastoquinol + NADP(+) + n H(+)(out). NDH-1 shuttles electrons from an unknown electron donor, via FMN and iron-sulfur (Fe-S) centers, to quinones in the respiratory and/or the photosynthetic chain. The immediate electron acceptor for the enzyme in this species is believed to be plastoquinone. Couples the redox reaction to proton translocation, and thus conserves the redox energy in a proton gradient. Cyanobacterial NDH-1 also plays a role in inorganic carbon-concentration. The polypeptide is NAD(P)H-quinone oxidoreductase subunit L (Prochlorococcus marinus (strain MIT 9515)).